The following is a 255-amino-acid chain: Enolase-phosphatase E1 (255 aa).

Residues Asp-22 and Glu-24 each contribute to the Mg(2+) site. Substrate is bound by residues 136–137 and Lys-173; that span reads SS. Mg(2+) is bound at residue Asp-199.

This sequence belongs to the HAD-like hydrolase superfamily. MasA/MtnC family. As to quaternary structure, monomer. It depends on Mg(2+) as a cofactor.

It localises to the cytoplasm. It is found in the nucleus. It catalyses the reaction 5-methylsulfanyl-2,3-dioxopentyl phosphate + H2O = 1,2-dihydroxy-5-(methylsulfanyl)pent-1-en-3-one + phosphate. Its pathway is amino-acid biosynthesis; L-methionine biosynthesis via salvage pathway; L-methionine from S-methyl-5-thio-alpha-D-ribose 1-phosphate: step 3/6. It functions in the pathway amino-acid biosynthesis; L-methionine biosynthesis via salvage pathway; L-methionine from S-methyl-5-thio-alpha-D-ribose 1-phosphate: step 4/6. In terms of biological role, bifunctional enzyme that catalyzes the enolization of 2,3-diketo-5-methylthiopentyl-1-phosphate (DK-MTP-1-P) into the intermediate 2-hydroxy-3-keto-5-methylthiopentenyl-1-phosphate (HK-MTPenyl-1-P), which is then dephosphorylated to form the acireductone 1,2-dihydroxy-3-keto-5-methylthiopentene (DHK-MTPene). The protein is Enolase-phosphatase E1 of Verticillium alfalfae (strain VaMs.102 / ATCC MYA-4576 / FGSC 10136) (Verticillium wilt of alfalfa).